Consider the following 558-residue polypeptide: Dimethylaniline monooxygenase [N-oxide-forming] 4 (558 aa).

FAD-binding positions include 9 to 13 (GAGVS), glutamate 32, and 40 to 41 (LW). NADP(+) is bound by residues 60-61 (TN) and 195-198 (TGGD). A helical membrane pass occupies residues 517-537 (AWGAPVLLASLLLICKSSLFL).

This sequence belongs to the FMO family. The cofactor is FAD. In terms of tissue distribution, liver.

It is found in the microsome membrane. The protein resides in the endoplasmic reticulum membrane. It carries out the reaction N,N-dimethylaniline + NADPH + O2 + H(+) = N,N-dimethylaniline N-oxide + NADP(+) + H2O. This protein is involved in the oxidative metabolism of a variety of xenobiotics such as drugs and pesticides. This is Dimethylaniline monooxygenase [N-oxide-forming] 4 (FMO4) from Homo sapiens (Human).